The chain runs to 87 residues: Small ribosomal subunit protein uS17 (87 aa).

Belongs to the universal ribosomal protein uS17 family. As to quaternary structure, part of the 30S ribosomal subunit.

One of the primary rRNA binding proteins, it binds specifically to the 5'-end of 16S ribosomal RNA. This chain is Small ribosomal subunit protein uS17, found in Thiobacillus denitrificans (strain ATCC 25259 / T1).